Reading from the N-terminus, the 46-residue chain is uncharacterized protein (46 aa).

Residues 1–46 are disordered; it reads MNFGIKPDVSSGPRKGGPFKELSDFSKTSPTPQQPRSLSGKSVMLP. Polar residues predominate over residues 25-40; sequence FSKTSPTPQQPRSLSG.

This is an uncharacterized protein from Dictyostelium discoideum (Social amoeba).